The primary structure comprises 50 residues: MKVTCVLVLTLMALTVCQVATAYCINVGMCIYDGYCCSNRCWGGMCSPWR.

Residues 1–22 (MKVTCVLVLTLMALTVCQVATA) form the signal peptide. 3 disulfide bridges follow: Cys24–Cys37, Cys30–Cys41, and Cys36–Cys46.

As to expression, expressed by the venom duct.

The protein localises to the secreted. In terms of biological role, probable neurotoxin. This chain is Conotoxin Cal6.19, found in Californiconus californicus (California cone).